A 186-amino-acid chain; its full sequence is Peptidyl-tRNA hydrolase (186 aa).

Catalysis depends on His19, which acts as the Proton acceptor. TRNA is bound by residues Phe64, Asn66, and Asn112.

Belongs to the PTH family. As to quaternary structure, monomer.

The protein resides in the cytoplasm. It catalyses the reaction an N-acyl-L-alpha-aminoacyl-tRNA + H2O = an N-acyl-L-amino acid + a tRNA + H(+). In terms of biological role, hydrolyzes ribosome-free peptidyl-tRNAs (with 1 or more amino acids incorporated), which drop off the ribosome during protein synthesis, or as a result of ribosome stalling. Its function is as follows. Catalyzes the release of premature peptidyl moieties from peptidyl-tRNA molecules trapped in stalled 50S ribosomal subunits, and thus maintains levels of free tRNAs and 50S ribosomes. The polypeptide is Peptidyl-tRNA hydrolase (Pelagibacter ubique (strain HTCC1062)).